The following is a 1756-amino-acid chain: RANBP2-like and GRIP domain-containing protein 2 (1756 aa).

Serine 21 carries the post-translational modification Phosphoserine. TPR repeat units lie at residues 59 to 92, 583 to 616, and 647 to 680; these read PRAHRFLGLLYELEENTEKAVECYRRSLELNPPQ, QKMGRGLNSSYDQQEYIGRSVHYWKKVLPLLKII, and EDAHITFAILDAVHGNIEDAVTAFESIKSVVSYW. The tract at residues 759–804 is disordered; that stretch reads GPLYKNGSLRNADSEIKHSTPSPTKYSLSPSKSYKYSPKTPPRWAE. Over residues 777 to 796 the composition is skewed to low complexity; it reads STPSPTKYSLSPSKSYKYSP. Residues 1029–1165 form the RanBD1 1 domain; the sequence is HFEPVVQMPE…FEECQRLLLD (137 aa). 2 disordered regions span residues 1206-1241 and 1299-1324; these read TKVTEEENKGSGTGAAGASDTTIKPNPENTGPTLEW and AKLNQSGTSVGTDEESDVTQEEERDG. Polar residues predominate over residues 1228–1237; that stretch reads IKPNPENTGP. The span at 1310–1322 shows a compositional bias: acidic residues; that stretch reads TDEESDVTQEEER. One can recognise a RanBD1 2 domain in the interval 1326-1462; that stretch reads YFEPVVPLPD…FDEAKTAQEK (137 aa). Residues 1573–1586 show a composition bias toward polar residues; sequence NDSETSSVAQSGSE. Residues 1573–1614 form a disordered region; the sequence is NDSETSSVAQSGSESKVEPKKCELSKNSDIEQSSDSKVKNLS. Basic and acidic residues predominate over residues 1587–1610; the sequence is SKVEPKKCELSKNSDIEQSSDSKV. Positions 1693–1743 constitute a GRIP domain; it reads QEESAANVEHLKNVLLQFIFLKPGSERESLLPVINTMLQLSPEEKGKLAAV.

The sequence is that of RANBP2-like and GRIP domain-containing protein 2 (RGPD2) from Homo sapiens (Human).